A 341-amino-acid chain; its full sequence is Glycerol-1-phosphate dehydrogenase [NAD(P)+] (341 aa).

NAD(+) is bound by residues 81–85 and 103–106; these read GKAID and TTAS. Asp108 lines the substrate pocket. An NAD(+)-binding site is contributed by Ser112. Substrate is bound at residue Asp151. 2 residues coordinate Zn(2+): Asp151 and His232. His236 is a substrate binding site. His253 is a binding site for Zn(2+).

The protein belongs to the glycerol-1-phosphate dehydrogenase family. Zn(2+) is required as a cofactor.

It is found in the cytoplasm. The enzyme catalyses sn-glycerol 1-phosphate + NAD(+) = dihydroxyacetone phosphate + NADH + H(+). It carries out the reaction sn-glycerol 1-phosphate + NADP(+) = dihydroxyacetone phosphate + NADPH + H(+). Its pathway is membrane lipid metabolism; glycerophospholipid metabolism. Catalyzes the NAD(P)H-dependent reduction of dihydroxyacetonephosphate (DHAP or glycerone phosphate) to glycerol 1-phosphate (G1P). The G1P thus generated is used as the glycerophosphate backbone of phospholipids in the cellular membranes of Archaea. The sequence is that of Glycerol-1-phosphate dehydrogenase [NAD(P)+] from Methanococcus aeolicus (strain ATCC BAA-1280 / DSM 17508 / OCM 812 / Nankai-3).